A 633-amino-acid chain; its full sequence is Phosphomethylpyrimidine synthase (633 aa).

Substrate is bound by residues Asn245, Met274, Tyr303, His339, 359 to 361 (SRG), 400 to 403 (DGLR), and Glu439. His443 is a Zn(2+) binding site. Tyr466 contributes to the substrate binding site. Residue His507 participates in Zn(2+) binding. [4Fe-4S] cluster is bound by residues Cys587, Cys590, and Cys595.

It belongs to the ThiC family. As to quaternary structure, homodimer. [4Fe-4S] cluster is required as a cofactor.

The enzyme catalyses 5-amino-1-(5-phospho-beta-D-ribosyl)imidazole + S-adenosyl-L-methionine = 4-amino-2-methyl-5-(phosphooxymethyl)pyrimidine + CO + 5'-deoxyadenosine + formate + L-methionine + 3 H(+). It functions in the pathway cofactor biosynthesis; thiamine diphosphate biosynthesis. Functionally, catalyzes the synthesis of the hydroxymethylpyrimidine phosphate (HMP-P) moiety of thiamine from aminoimidazole ribotide (AIR) in a radical S-adenosyl-L-methionine (SAM)-dependent reaction. This chain is Phosphomethylpyrimidine synthase, found in Neisseria gonorrhoeae (strain ATCC 700825 / FA 1090).